The primary structure comprises 375 residues: Growth/differentiation factor 8 (375 aa).

The first 23 residues, 1–23, serve as a signal peptide directing secretion; that stretch reads MQKLAVYVYIYLFVQISVDPVAL. Residues 24–266 constitute a propeptide that is removed on maturation; the sequence is DGSSQPTENT…VTDTPKRSRR (243 aa). An N-linked (GlcNAc...) asparagine glycan is attached at asparagine 71. Disulfide bonds link cysteine 272-cysteine 282, cysteine 281-cysteine 340, cysteine 309-cysteine 372, and cysteine 313-cysteine 374.

This sequence belongs to the TGF-beta family. As to quaternary structure, homodimer; disulfide-linked.

The protein resides in the secreted. In terms of biological role, acts specifically as a negative regulator of skeletal muscle growth. The chain is Growth/differentiation factor 8 (MSTN) from Excalfactoria chinensis (Blue-breasted quail).